A 101-amino-acid polypeptide reads, in one-letter code: Movement protein (101 aa).

Residues 30–50 traverse the membrane as a helical segment; sequence EVAILSFVALICFYLLYLWVL. Residues 75–101 form a disordered region; that stretch reads VDRSNPIPNLPAPPSQGNPGPFVPGTG.

It belongs to the mastrevirus movement protein family. Interacts with the capsid protein (CP). Part of a MP-CP-viral DNA complex.

It is found in the host membrane. Functionally, involved in the viral transport within, and between cells. In Maize streak virus genotype A (isolate South Africa) (MSV), this protein is Movement protein.